The chain runs to 181 residues: 6,7-dimethyl-8-ribityllumazine synthase 2 (181 aa).

The disordered stretch occupies residues 1–23; the sequence is MSLPMTETVTDPAETAPPTAERS. Residues Trp-40, 74–76, 98–100, and Ser-129 contribute to the 5-amino-6-(D-ribitylamino)uracil site; these read SFE and LVV.

Belongs to the DMRL synthase family.

It carries out the reaction (2S)-2-hydroxy-3-oxobutyl phosphate + 5-amino-6-(D-ribitylamino)uracil = 6,7-dimethyl-8-(1-D-ribityl)lumazine + phosphate + 2 H2O + H(+). The protein operates within cofactor biosynthesis; riboflavin biosynthesis; riboflavin from 2-hydroxy-3-oxobutyl phosphate and 5-amino-6-(D-ribitylamino)uracil: step 1/2. Catalyzes the formation of 6,7-dimethyl-8-ribityllumazine by condensation of 5-amino-6-(D-ribitylamino)uracil with 3,4-dihydroxy-2-butanone 4-phosphate. This is the penultimate step in the biosynthesis of riboflavin. The polypeptide is 6,7-dimethyl-8-ribityllumazine synthase 2 (Rhodopseudomonas palustris (strain ATCC BAA-98 / CGA009)).